The sequence spans 295 residues: Indole-3-glycerol phosphate synthase (295 aa).

It belongs to the TrpC family.

It carries out the reaction 1-(2-carboxyphenylamino)-1-deoxy-D-ribulose 5-phosphate + H(+) = (1S,2R)-1-C-(indol-3-yl)glycerol 3-phosphate + CO2 + H2O. The protein operates within amino-acid biosynthesis; L-tryptophan biosynthesis; L-tryptophan from chorismate: step 4/5. The sequence is that of Indole-3-glycerol phosphate synthase from Synechococcus sp. (strain CC9605).